We begin with the raw amino-acid sequence, 292 residues long: G1/S-specific cyclin-D3 (292 aa).

The Cyclin N-terminal domain occupies 27–152; that stretch reads VLQSLLRLEE…LVLGKLKWDL (126 aa). Residues 254 to 292 are disordered; the sequence is SLREASQTSSSPAPKAPRGSSSQGPSQTSTPTDVTAIHL. Residues Ser264 and Ser279 each carry the phosphoserine modification. Over residues 272–285 the composition is skewed to low complexity; sequence GSSSQGPSQTSTPT. Thr283 carries the post-translational modification Phosphothreonine.

Belongs to the cyclin family. Cyclin D subfamily. In terms of assembly, interacts with the CDK4 and CDK6 protein kinases to form a serine/threonine kinase holoenzyme complex. The cyclin subunit imparts substrate specificity to the complex. Interacts with ATF5. Interacts with EIF3K. Component of the ternary complex cyclin D/CDK4/CDKN1B required for nuclear translocation and modulation of CDK4-mediated kinase activity. Can form similar complexes with either CDKN1A or CDKN2A. Post-translationally, phosphorylation at Thr-283 by MAP kinases is required for ubiquitination and degradation by the DCX(AMBRA1) complex. Ubiquitinated by the DCX(AMBRA1) complex during the transition from G1 to S cell phase, leading to its degradation: ubiquitination is dependent on Thr-283 phosphorylation. The DCX(AMBRA1) complex represents the major regulator of CCND3 stability during the G1/S transition. Polyubiquitinated by the SCF(FBXL2) complex, leading to proteasomal degradation.

It localises to the nucleus. It is found in the cytoplasm. In terms of biological role, regulatory component of the cyclin D3-CDK4 (DC) complex that phosphorylates and inhibits members of the retinoblastoma (RB) protein family including RB1 and regulates the cell-cycle during G(1)/S transition. Phosphorylation of RB1 allows dissociation of the transcription factor E2F from the RB/E2F complex and the subsequent transcription of E2F target genes which are responsible for the progression through the G(1) phase. Hypophosphorylates RB1 in early G(1) phase. Cyclin D-CDK4 complexes are major integrators of various mitogenenic and antimitogenic signals. Component of the ternary complex, cyclin D3/CDK4/CDKN1B, required for nuclear translocation and activity of the cyclin D-CDK4 complex. Shows transcriptional coactivator activity with ATF5 independently of CDK4. The protein is G1/S-specific cyclin-D3 of Homo sapiens (Human).